The sequence spans 518 residues: uncharacterized protein (518 aa).

It localises to the virion. This is an uncharacterized protein from Acanthamoeba polyphaga (Amoeba).